Consider the following 232-residue polypeptide: Ubiquinone biosynthesis O-methyltransferase (232 aa).

Arg-36, Gly-55, Asp-76, and Met-120 together coordinate S-adenosyl-L-methionine.

The protein belongs to the methyltransferase superfamily. UbiG/COQ3 family.

It carries out the reaction a 3-demethylubiquinol + S-adenosyl-L-methionine = a ubiquinol + S-adenosyl-L-homocysteine + H(+). It catalyses the reaction a 3-(all-trans-polyprenyl)benzene-1,2-diol + S-adenosyl-L-methionine = a 2-methoxy-6-(all-trans-polyprenyl)phenol + S-adenosyl-L-homocysteine + H(+). The protein operates within cofactor biosynthesis; ubiquinone biosynthesis. Functionally, O-methyltransferase that catalyzes the 2 O-methylation steps in the ubiquinone biosynthetic pathway. The polypeptide is Ubiquinone biosynthesis O-methyltransferase (Chromobacterium violaceum (strain ATCC 12472 / DSM 30191 / JCM 1249 / CCUG 213 / NBRC 12614 / NCIMB 9131 / NCTC 9757 / MK)).